The chain runs to 447 residues: ATP-dependent 6-phosphofructokinase (447 aa).

ATP is bound by residues Gly-88, 154 to 155, and 179 to 182; these read RG and GDGT. Asp-180 provides a ligand contact to Mg(2+). Substrate-binding positions include 208-210, 253-255, Glu-315, and 368-371; these read TVD, MGR, and YIIR. The active-site Proton acceptor is Asp-210.

This sequence belongs to the phosphofructokinase type A (PFKA) family. PPi-dependent PFK group II subfamily. Atypical ATP-dependent clade 'X' sub-subfamily. As to quaternary structure, homodimer. Mg(2+) is required as a cofactor.

The protein localises to the cytoplasm. It carries out the reaction beta-D-fructose 6-phosphate + ATP = beta-D-fructose 1,6-bisphosphate + ADP + H(+). It functions in the pathway carbohydrate degradation; glycolysis; D-glyceraldehyde 3-phosphate and glycerone phosphate from D-glucose: step 3/4. Functionally, catalyzes the phosphorylation of D-fructose 6-phosphate to fructose 1,6-bisphosphate by ATP, the first committing step of glycolysis. In Borreliella burgdorferi (strain ATCC 35210 / DSM 4680 / CIP 102532 / B31) (Borrelia burgdorferi), this protein is ATP-dependent 6-phosphofructokinase.